A 133-amino-acid polypeptide reads, in one-letter code: Small ribosomal subunit protein uS19 (133 aa).

The protein belongs to the universal ribosomal protein uS19 family.

Protein S19 forms a complex with S13 that binds strongly to the 16S ribosomal RNA. This chain is Small ribosomal subunit protein uS19 (rps19), found in Archaeoglobus fulgidus (strain ATCC 49558 / DSM 4304 / JCM 9628 / NBRC 100126 / VC-16).